Here is a 100-residue protein sequence, read N- to C-terminus: Small ribosomal subunit protein uS14c (100 aa).

The protein belongs to the universal ribosomal protein uS14 family. In terms of assembly, part of the 30S ribosomal subunit.

The protein resides in the plastid. It is found in the chloroplast. Its function is as follows. Binds 16S rRNA, required for the assembly of 30S particles. In Cucumis sativus (Cucumber), this protein is Small ribosomal subunit protein uS14c.